The chain runs to 207 residues: MKQNKINKKFVYLISPNKIPDINFYDDLALVLSSKKISFFQLRLKKETNLNKLIIGKKIKKICNKHKVKFLINDDPLLAKKLNADGCHLGQKDMDLIKARKILKNKIIGVTCHNSINLAKKAINDGADYLAFGAFYATKTKTVKYRASLTVLKSIKKITSLPIVAIGGIKLSNYKKLLLNKANFLAISGYIWNNKKYKPLEAIRKLK.

Residues 41–45 (QLRLK) and asparagine 73 each bind 4-amino-2-methyl-5-(diphosphooxymethyl)pyrimidine. Aspartate 74 and aspartate 93 together coordinate Mg(2+). Position 111 (threonine 111) interacts with 4-amino-2-methyl-5-(diphosphooxymethyl)pyrimidine. Position 138–140 (138–140 (TKT)) interacts with 2-[(2R,5Z)-2-carboxy-4-methylthiazol-5(2H)-ylidene]ethyl phosphate. Position 141 (lysine 141) interacts with 4-amino-2-methyl-5-(diphosphooxymethyl)pyrimidine. Glycine 168 contributes to the 2-[(2R,5Z)-2-carboxy-4-methylthiazol-5(2H)-ylidene]ethyl phosphate binding site.

This sequence belongs to the thiamine-phosphate synthase family. The cofactor is Mg(2+).

It carries out the reaction 2-[(2R,5Z)-2-carboxy-4-methylthiazol-5(2H)-ylidene]ethyl phosphate + 4-amino-2-methyl-5-(diphosphooxymethyl)pyrimidine + 2 H(+) = thiamine phosphate + CO2 + diphosphate. It catalyses the reaction 2-(2-carboxy-4-methylthiazol-5-yl)ethyl phosphate + 4-amino-2-methyl-5-(diphosphooxymethyl)pyrimidine + 2 H(+) = thiamine phosphate + CO2 + diphosphate. The catalysed reaction is 4-methyl-5-(2-phosphooxyethyl)-thiazole + 4-amino-2-methyl-5-(diphosphooxymethyl)pyrimidine + H(+) = thiamine phosphate + diphosphate. It participates in cofactor biosynthesis; thiamine diphosphate biosynthesis; thiamine phosphate from 4-amino-2-methyl-5-diphosphomethylpyrimidine and 4-methyl-5-(2-phosphoethyl)-thiazole: step 1/1. In terms of biological role, condenses 4-methyl-5-(beta-hydroxyethyl)thiazole monophosphate (THZ-P) and 2-methyl-4-amino-5-hydroxymethyl pyrimidine pyrophosphate (HMP-PP) to form thiamine monophosphate (TMP). The polypeptide is Thiamine-phosphate synthase (Pelagibacter ubique (strain HTCC1062)).